Consider the following 617-residue polypeptide: Chitin elicitor receptor kinase 1 (617 aa).

The signal sequence occupies residues 1-23 (MKLKISLIAPILLLFSFFFAVES). Over 24 to 232 (KCRTSCPLAL…KSSKQDGVGA (209 aa)) the chain is Extracellular. 3 disulfide bridges follow: C25–C93, C29–C155, and C91–C153. N-linked (GlcNAc...) asparagine glycans are attached at residues N40, N52, and N102. Residues 46-74 (VINQNLNSSIAPYDQINFDPILRYNSNIK) enclose the LysM 1; degenerate domain. A LysM 2; degenerate domain is found at 108–140 (RQEDTYERVAISNYANLTTMESLQARNPFPATN). 109–115 (QEDTYER) lines the chitin pocket. The N-linked (GlcNAc...) asparagine glycan is linked to N123. Position 137–143 (137–143 (PATNIPL)) interacts with chitin. N152 carries an N-linked (GlcNAc...) asparagine glycan. Positions 168-211 (VTYPLRPEDSLSSIARSSGVSADILQRYNPGVNFNSGNGIVYVP) constitute a LysM 3 domain. Residues 233-253 (GVIAGIVIGVIVALLLILFIV) traverse the membrane as a helical segment. Over 254-617 (YYAYRKNKSK…EDLVSLMSGR (364 aa)) the chain is Cytoplasmic. 3 positions are modified to phosphoserine: S266, S268, and S274. A Protein kinase domain is found at 322–594 (FNLSFKIGQG…YIVVALSTLF (273 aa)). Residues 328–336 (IGQGGFGAV) and K349 each bind ATP. Y390 is subject to Phosphotyrosine. Residue D441 is the Proton acceptor of the active site. Residues T479 and T519 each carry the phosphothreonine modification.

This sequence belongs to the protein kinase superfamily. Ser/Thr protein kinase family. As to quaternary structure, forms homodimers and homooligomers. Homodimerization is required to trigger plant defenses. Binds to chitin, chitosan and chito-oligomer oligosaccharide elicitors. Interaction with chitin octamer (NAG(8)) promotes homodimerization while shorter chitin oligomers inhibit homodimerization. Interacts with Pseudomonas syringae hopAB2/avrPtoB. Interacts (preferentially when unphosphorylated) with PBL27 at the plasma membrane. Binds to IOS1. Post-translationally, autophosphorylated. Autophosphorylation is induced by chitin and derivatives. Ubiquitinated and targeted to the proteasome by hopAB2/avrPtoB of Pseudomonas syringae pv. tomato DC3000. In terms of tissue distribution, expressed ubiquitously, with lowest expression in pollen.

The protein resides in the cell membrane. The enzyme catalyses L-seryl-[protein] + ATP = O-phospho-L-seryl-[protein] + ADP + H(+). The catalysed reaction is L-threonyl-[protein] + ATP = O-phospho-L-threonyl-[protein] + ADP + H(+). Activated by chitin-mediated homodimerization. Lysin motif (LysM) receptor kinase that functions as a cell surface receptor in chitin elicitor (chitooligosaccharides) signaling leading to innate immunity toward both biotic and abiotic stresses (e.g. tolerance to salinity, heavy-metal stresses, and Botrytis cinerea infection). Recognizes microbe-derived N-acetylglucosamine (NAG)-containing ligands. Involved in the resistance to pathogenic fungi Alternaria brassicicola and Erysiphe cichoracearum, probably by sensing microbe-associated molecular patterns (MAMP) and pathogen-associated molecular patterns (PAMP). Plays an essential role in detecting peptidoglycans (e.g. PGNs) and restricting bacterial growth. Target of the bacterial type III effector E3-ligase protein hopAB2/avrPtoB of Pseudomonas syringae pv. tomato DC3000 that mediates ubiquitination and subsequent proteolysis, thus blocking all defense responses by suppressing PAMP-triggered immunity (PTI). Mediates chitin-induced phosphorylation of PBL27. The sequence is that of Chitin elicitor receptor kinase 1 (CERK1) from Arabidopsis thaliana (Mouse-ear cress).